The following is a 290-amino-acid chain: Formamidopyrimidine-DNA glycosylase (290 aa).

The active-site Schiff-base intermediate with DNA is Pro-2. The active-site Proton donor is Glu-3. Residue Lys-58 is the Proton donor; for beta-elimination activity of the active site. The DNA site is built by His-98, Arg-126, and Arg-171. Residues 256–290 form an FPG-type zinc finger; sequence FVYDRAGLPCRVCATPVRQIVQGQRSTFYCPKCQH. The Proton donor; for delta-elimination activity role is filled by Arg-280.

This sequence belongs to the FPG family. Monomer. It depends on Zn(2+) as a cofactor.

It carries out the reaction Hydrolysis of DNA containing ring-opened 7-methylguanine residues, releasing 2,6-diamino-4-hydroxy-5-(N-methyl)formamidopyrimidine.. The catalysed reaction is 2'-deoxyribonucleotide-(2'-deoxyribose 5'-phosphate)-2'-deoxyribonucleotide-DNA = a 3'-end 2'-deoxyribonucleotide-(2,3-dehydro-2,3-deoxyribose 5'-phosphate)-DNA + a 5'-end 5'-phospho-2'-deoxyribonucleoside-DNA + H(+). Functionally, involved in base excision repair of DNA damaged by oxidation or by mutagenic agents. Acts as a DNA glycosylase that recognizes and removes damaged bases. Has a preference for oxidized purines, such as 7,8-dihydro-8-oxoguanine (8-oxoG). Has AP (apurinic/apyrimidinic) lyase activity and introduces nicks in the DNA strand. Cleaves the DNA backbone by beta-delta elimination to generate a single-strand break at the site of the removed base with both 3'- and 5'-phosphates. In Cupriavidus taiwanensis (strain DSM 17343 / BCRC 17206 / CCUG 44338 / CIP 107171 / LMG 19424 / R1) (Ralstonia taiwanensis (strain LMG 19424)), this protein is Formamidopyrimidine-DNA glycosylase.